The primary structure comprises 148 residues: Holo-[acyl-carrier-protein] synthase (148 aa).

Mg(2+)-binding residues include Asp-8 and Glu-57.

It belongs to the P-Pant transferase superfamily. AcpS family. Mg(2+) serves as cofactor.

It is found in the cytoplasm. The enzyme catalyses apo-[ACP] + CoA = holo-[ACP] + adenosine 3',5'-bisphosphate + H(+). Functionally, transfers the 4'-phosphopantetheine moiety from coenzyme A to a Ser of acyl-carrier-protein. This is Holo-[acyl-carrier-protein] synthase from Ruegeria pomeroyi (strain ATCC 700808 / DSM 15171 / DSS-3) (Silicibacter pomeroyi).